Reading from the N-terminus, the 156-residue chain is Eosinophil cationic protein 2 (156 aa).

The N-terminal stretch at 1 to 25 (MGPKLLESRLCLLLLLGLVLMLASC) is a signal peptide. The Proton acceptor role is filled by histidine 38. Cystine bridges form between cysteine 47/cysteine 106, cysteine 61/cysteine 119, cysteine 79/cysteine 134, and cysteine 86/cysteine 94. 62 to 66 (KGLNT) provides a ligand contact to substrate. Asparagine 89, asparagine 96, and asparagine 107 each carry an N-linked (GlcNAc...) asparagine glycan. Histidine 151 (proton donor) is an active-site residue.

The protein belongs to the pancreatic ribonuclease family.

It is found in the cytoplasmic granule. Cytotoxin and helminthotoxin with ribonuclease activity. Selectively chemotactic for dendritic cells. Possesses a wide variety of biological activities. The polypeptide is Eosinophil cationic protein 2 (Ear2) (Mus musculus (Mouse)).